Here is a 326-residue protein sequence, read N- to C-terminus: Light-induced protein, chloroplastic (326 aa).

The transit peptide at 1-63 directs the protein to the chloroplast; that stretch reads MASISSLNQI…TNPKPKFTAQ (63 aa).

It belongs to the LIPC family. In terms of assembly, associates with the major light-harvesting antenna complex polypeptides of the PSII oxygen-evolving complex. In terms of tissue distribution, expressed at high levels in leaves and in the petals and anthers of flowers.

Its subcellular location is the plastid. The protein localises to the chloroplast thylakoid membrane. Its function is as follows. Required for normal plant growth. May be both photoprotective and play an ancillary role in photosynthesis. May structurally stabilize thylakoids during osmotic and oxidative stress. The sequence is that of Light-induced protein, chloroplastic from Solanum demissum (Wild potato).